Here is a 167-residue protein sequence, read N- to C-terminus: Xanthine-guanine phosphoribosyltransferase (167 aa).

5-phospho-alpha-D-ribose 1-diphosphate contacts are provided by residues 47 to 48 (RG), Gln-79, and 102 to 110 (DDLVDSGKT). Position 79 (Gln-79) interacts with GMP. Asp-103 is a binding site for Mg(2+). Residues Asp-106 and Ile-149 each contribute to the guanine site. The xanthine site is built by Asp-106 and Ile-149. Residues 106–110 (DSGKT) and 148–149 (WI) each bind GMP.

Belongs to the purine/pyrimidine phosphoribosyltransferase family. XGPT subfamily. As to quaternary structure, homotetramer. Mg(2+) is required as a cofactor.

It is found in the cell inner membrane. The enzyme catalyses GMP + diphosphate = guanine + 5-phospho-alpha-D-ribose 1-diphosphate. It carries out the reaction XMP + diphosphate = xanthine + 5-phospho-alpha-D-ribose 1-diphosphate. It catalyses the reaction IMP + diphosphate = hypoxanthine + 5-phospho-alpha-D-ribose 1-diphosphate. The protein operates within purine metabolism; GMP biosynthesis via salvage pathway; GMP from guanine: step 1/1. It functions in the pathway purine metabolism; XMP biosynthesis via salvage pathway; XMP from xanthine: step 1/1. Functionally, purine salvage pathway enzyme that catalyzes the transfer of the ribosyl-5-phosphate group from 5-phospho-alpha-D-ribose 1-diphosphate (PRPP) to the N9 position of the 6-oxopurines guanine and xanthine to form the corresponding ribonucleotides GMP (guanosine 5'-monophosphate) and XMP (xanthosine 5'-monophosphate), with the release of PPi. To a lesser extent, also acts on hypoxanthine. The chain is Xanthine-guanine phosphoribosyltransferase from Cereibacter sphaeroides (strain ATCC 17029 / ATH 2.4.9) (Rhodobacter sphaeroides).